Here is a 113-residue protein sequence, read N- to C-terminus: Phosphoribosyl-ATP pyrophosphatase (113 aa).

The protein belongs to the PRA-PH family.

Its subcellular location is the cytoplasm. It catalyses the reaction 1-(5-phospho-beta-D-ribosyl)-ATP + H2O = 1-(5-phospho-beta-D-ribosyl)-5'-AMP + diphosphate + H(+). Its pathway is amino-acid biosynthesis; L-histidine biosynthesis; L-histidine from 5-phospho-alpha-D-ribose 1-diphosphate: step 2/9. The protein is Phosphoribosyl-ATP pyrophosphatase of Janthinobacterium sp. (strain Marseille) (Minibacterium massiliensis).